The following is a 427-amino-acid chain: MTAIVDIIGREILDSRGNPTVEVDVALEDGAMGRAAVPSGASTGAHEAVELRDDDQTRYFGKGVRKAVDAINGEIFDAIGGMDAEQQAQIDEILIGLDGTANKSRLGANAILGVSLALARAAADSLDMPLYRYVGGVSARTLPVPMMNIVNGGVHADNPIDFQEFMIMPVGAKTFSEGLRCGSEIFHTLRAELKKAGHNTNVGDEGGFAPNLPSASAALDFIMGAIVKAGYKPGDDVALALDPAASEFFKDGKYVYAGEGKTRSIEEQARYLAKLASDYPIVSIEDGMAEDDFEGWKLLTDLIGKSCQLVGDDLFVTNVTRLADGIGKGLANSILIKVNQIGTLTETLAAVEMAYKAGYTAVMSHRSGETEDSTIADLAVATNCGQIKTGSLSRSDRAAKYNQLLRIEQQLGAQARYGGRAALKALA.

Gln163 serves as a coordination point for (2R)-2-phosphoglycerate. The active-site Proton donor is the Glu205. Positions 242, 285, and 312 each coordinate Mg(2+). (2R)-2-phosphoglycerate-binding residues include Lys337, Arg366, Ser367, and Lys388. The Proton acceptor role is filled by Lys337.

It belongs to the enolase family. It depends on Mg(2+) as a cofactor.

It localises to the cytoplasm. It is found in the secreted. Its subcellular location is the cell surface. It catalyses the reaction (2R)-2-phosphoglycerate = phosphoenolpyruvate + H2O. Its pathway is carbohydrate degradation; glycolysis; pyruvate from D-glyceraldehyde 3-phosphate: step 4/5. Its function is as follows. Catalyzes the reversible conversion of 2-phosphoglycerate (2-PG) into phosphoenolpyruvate (PEP). It is essential for the degradation of carbohydrates via glycolysis. This is Enolase from Nitrobacter hamburgensis (strain DSM 10229 / NCIMB 13809 / X14).